The following is a 314-amino-acid chain: uncharacterized protein (314 aa).

The interval 1–70 is disordered; that stretch reads MAGNSQRRGA…QGRHKKTDDT (70 aa). Positions 44 to 65 are enriched in basic residues; sequence RPHHPAGKRAAKAARQAQGRHK. The S-adenosyl-L-methionine site is built by G265, I285, and L294.

Belongs to the class IV-like SAM-binding methyltransferase superfamily. RNA methyltransferase TrmH family.

This is an uncharacterized protein from Mycolicibacterium gilvum (strain PYR-GCK) (Mycobacterium gilvum (strain PYR-GCK)).